We begin with the raw amino-acid sequence, 645 residues long: Transcription termination factor FttA (645 aa).

Positions 10 to 77 (APSNQNIMAT…IIVRIDESVR (68 aa)) are KHa. Residues 78–146 (KKEEDARKML…WTLRIRKATT (69 aa)) are KHb. The interval 187–391 (EISLTALGGF…LLIESTYGAK (205 aa)) is metallo-beta-lactamase N-terminus. 6 residues coordinate Zn(2+): His250, His252, Asp254, His255, His337, and Asp360. The beta-Casp stretch occupies residues 392-586 (EDIQPTRQEV…CRMEKLDGFS (195 aa)). The segment at 587–645 (GHSDYNQLTGFVQKLRPKLRRVLVNHGERRKSENLALAVRRMFRIPAHYPQIQESIKLF) is metallo-beta-lactamase C-terminus. Residue His612 participates in Zn(2+) binding.

This sequence belongs to the metallo-beta-lactamase superfamily. RNA-metabolizing metallo-beta-lactamase-like family. FttA subfamily. As to quaternary structure, homodimer. Interacts with RNA polymerase (RNAP), interacts with the Spt4-Spt5 complex. The cofactor is Zn(2+).

In terms of biological role, terminates transcription on the whole genome. Termination is linked to FttA-mediated RNA cleavage and does not require NTP hydrolysis. Cleaves endonucleolytically at the RNA exit channel of RNA polymerase (RNAP); the 5'-3' exonuclease activity of this protein degrades the nascent RNA released from RNAP. Its function is as follows. Terminates transcription genome-wide in M.maripaludis. Restores wild-type growth to a strain of Methanococcus maripaludis depleted for this gene at 22 degrees Celsius and prevents transcriptional read-through. Transcription termination is most effective in vivo on RNAs with more than one U4-tract in their 3'-ends. Has endonuclease activity after U-rich tracts in transcription termination sequences. This is Transcription termination factor FttA from Cenarchaeum symbiosum (strain A).